The chain runs to 303 residues: Digeranylgeranylglyceryl phosphate synthase (303 aa).

7 consecutive transmembrane segments (helical) span residues 23 to 43 (VLGV…AAIA), 88 to 108 (LALA…PLTG), 130 to 150 (LPGN…GSLA), 164 to 184 (TIPI…VKGV), 206 to 228 (FALR…AAPL), 232 to 254 (GYAF…AACL), and 272 to 292 (VAMF…PVFY).

The protein belongs to the UbiA prenyltransferase family. DGGGP synthase subfamily. Mg(2+) is required as a cofactor.

The protein localises to the cell membrane. It carries out the reaction sn-3-O-(geranylgeranyl)glycerol 1-phosphate + (2E,6E,10E)-geranylgeranyl diphosphate = 2,3-bis-O-(geranylgeranyl)-sn-glycerol 1-phosphate + diphosphate. It participates in membrane lipid metabolism; glycerophospholipid metabolism. In terms of biological role, prenyltransferase that catalyzes the transfer of the geranylgeranyl moiety of geranylgeranyl diphosphate (GGPP) to the C2 hydroxyl of (S)-3-O-geranylgeranylglyceryl phosphate (GGGP). This reaction is the second ether-bond-formation step in the biosynthesis of archaeal membrane lipids. The polypeptide is Digeranylgeranylglyceryl phosphate synthase (Ignicoccus hospitalis (strain KIN4/I / DSM 18386 / JCM 14125)).